A 134-amino-acid chain; its full sequence is ATP synthase epsilon chain (134 aa).

This sequence belongs to the ATPase epsilon chain family. In terms of assembly, F-type ATPases have 2 components, CF(1) - the catalytic core - and CF(0) - the membrane proton channel. CF(1) has five subunits: alpha(3), beta(3), gamma(1), delta(1), epsilon(1). CF(0) has three main subunits: a, b and c.

Its subcellular location is the cellular thylakoid membrane. Functionally, produces ATP from ADP in the presence of a proton gradient across the membrane. This Prochlorococcus marinus (strain MIT 9301) protein is ATP synthase epsilon chain.